The sequence spans 351 residues: Putative aminodehydroquinate synthase (351 aa).

NAD(+)-binding positions include 65-68, 97-101, 121-122, K134, K143, and 161-164; these read EPTK, GTTTD, TS, and YLTT. Residues E176, H225, and H241 each contribute to the Zn(2+) site.

The protein belongs to the sugar phosphate cyclases superfamily. aDHQS family. Requires NAD(+) as cofactor. The cofactor is Co(2+). Zn(2+) serves as cofactor.

Its function is as follows. May catalyze the conversion of 3,4-dideoxy-4-amino-D-arabino-heptulosonate 7-phosphate (aDAHP) to 5-deoxy-5-amino-3-dehydroquinate (aDHQ). Probably involved in the formation of 3-amino-5-hydroxybenzoic acid (AHBA), the precursor of rifamycin and related ansamycins. The protein is Putative aminodehydroquinate synthase of Amycolatopsis mediterranei (strain S699) (Nocardia mediterranei).